Here is a 450-residue protein sequence, read N- to C-terminus: UDP-N-acetylmuramoylalanine--D-glutamate ligase (450 aa).

119–125 (GSNGKTT) contributes to the ATP binding site.

Belongs to the MurCDEF family.

It localises to the cytoplasm. The catalysed reaction is UDP-N-acetyl-alpha-D-muramoyl-L-alanine + D-glutamate + ATP = UDP-N-acetyl-alpha-D-muramoyl-L-alanyl-D-glutamate + ADP + phosphate + H(+). It participates in cell wall biogenesis; peptidoglycan biosynthesis. Cell wall formation. Catalyzes the addition of glutamate to the nucleotide precursor UDP-N-acetylmuramoyl-L-alanine (UMA). This is UDP-N-acetylmuramoylalanine--D-glutamate ligase from Streptococcus pneumoniae (strain ATCC BAA-255 / R6).